A 284-amino-acid polypeptide reads, in one-letter code: Methylglyoxal reductase YeaE (284 aa).

This sequence belongs to the aldo/keto reductase family.

The enzyme catalyses hydroxyacetone + NADP(+) = methylglyoxal + NADPH + H(+). It catalyses the reaction a primary alcohol + NADP(+) = an aldehyde + NADPH + H(+). Its function is as follows. Aldo-keto reductase that contributes to cellular methylglyoxal detoxification by catalyzing the NADPH-dependent conversion of methylglyoxal to acetol. It also exhibits activity with glyoxal and probably plays a significant role in detoxification of glyoxal in vivo. Can also use aromatic aldehydes such as 4-nitrobenzaldehyde, 3-nitrobenzaldehyde and benzaldehyde, and phenylglyoxal. The sequence is that of Methylglyoxal reductase YeaE (yeaE) from Escherichia coli (strain K12).